Consider the following 561-residue polypeptide: Putative transport protein YbjL (561 aa).

A run of 5 helical transmembrane segments spans residues 8-28 (LLNG…LCLG), 32-52 (LGSV…LLGQ), 66-86 (FMLF…SIFF), 94-114 (MLAL…GKLF), and 158-178 (NLSL…IVGA). 2 consecutive RCK C-terminal domains span residues 200–288 (RGLD…SFRN) and 292–373 (VFDR…RIGF). Transmembrane regions (helical) follow at residues 383–403 (LLAF…TFQF), 406–426 (FSFG…LGFL), 447–467 (FGLM…ISNG), 475–495 (MLIA…LFGA), and 540–560 (AIAN…WPGL).

It belongs to the AAE transporter (TC 2.A.81) family. YbjL subfamily.

It is found in the cell membrane. In Salmonella dublin (strain CT_02021853), this protein is Putative transport protein YbjL.